A 384-amino-acid chain; its full sequence is GTPase Obg (384 aa).

The Obg domain maps to 1-159 (MKFIDEAKIE…RSLQLELKVL (159 aa)). The disordered stretch occupies residues 20 to 46 (ATSFRREKFVPRGGPDGGDGGKGGSVW). Residues 33-43 (GPDGGDGGKGG) are compositionally biased toward gly residues. An OBG-type G domain is found at 160–348 (ADVGLLGMPN…LVHQINQYLI (189 aa)). GTP is bound by residues 166-173 (GMPNAGKS), 191-195 (FTTLH), 213-216 (DIPG), 284-287 (NKLD), and 329-331 (SAL). Mg(2+)-binding residues include serine 173 and threonine 193. The interval 364–384 (ATNVEIAEQQPKTDTGVFKPE) is disordered.

Belongs to the TRAFAC class OBG-HflX-like GTPase superfamily. OBG GTPase family. As to quaternary structure, monomer. Requires Mg(2+) as cofactor.

It localises to the cytoplasm. Functionally, an essential GTPase which binds GTP, GDP and possibly (p)ppGpp with moderate affinity, with high nucleotide exchange rates and a fairly low GTP hydrolysis rate. Plays a role in control of the cell cycle, stress response, ribosome biogenesis and in those bacteria that undergo differentiation, in morphogenesis control. The protein is GTPase Obg of Neisseria meningitidis serogroup A / serotype 4A (strain DSM 15465 / Z2491).